A 257-amino-acid polypeptide reads, in one-letter code: Glucanase inhibitor protein 1 (257 aa).

Positions 1–28 are cleaved as a signal peptide; the sequence is MKVFPALTSALVALGTAGVEAEHVQRSL. The region spanning 29-256 is the Peptidase S1 domain; the sequence is VMGGGTVPVG…GLEWINSVIK (228 aa). A disulfide bridge connects residues C56 and C72. Residues N107 and N180 are each glycosylated (N-linked (GlcNAc...) asparagine). 2 disulfides stabilise this stretch: C181–C191 and C201–C232. N213 carries N-linked (GlcNAc...) asparagine glycosylation.

It belongs to the peptidase S1 family. In terms of assembly, interacts with host endoglucanases EGaseA.

The protein localises to the secreted. Functionally, secreted effector that suppresses host plant glucan elicitor-mediated defense responses. Targets host endoglucanase EGaseA and inhibits the EGaseA-mediated release of elicitor-active glucan oligosaccharides from P.sojae cell walls. The sequence is that of Glucanase inhibitor protein 1 from Phytophthora sojae (Soybean stem and root rot agent).